Consider the following 258-residue polypeptide: UPF0246 protein YaaA (258 aa).

This sequence belongs to the UPF0246 family.

The protein is UPF0246 protein YaaA of Escherichia coli (strain UTI89 / UPEC).